We begin with the raw amino-acid sequence, 94 residues long: Small ribosomal subunit protein bS6 (94 aa).

It belongs to the bacterial ribosomal protein bS6 family.

Its function is as follows. Binds together with bS18 to 16S ribosomal RNA. The chain is Small ribosomal subunit protein bS6 from Alkaliphilus oremlandii (strain OhILAs) (Clostridium oremlandii (strain OhILAs)).